The chain runs to 643 residues: Threonine--tRNA ligase (643 aa).

The region spanning 1–61 (MPIITLPDGS…SEDSSLEIIT (61 aa)) is the TGS domain. Residues 243–534 (DHRRIGKALD…ITEEYAGFFP (292 aa)) are catalytic. 3 residues coordinate Zn(2+): Cys-334, His-385, and His-511.

Belongs to the class-II aminoacyl-tRNA synthetase family. In terms of assembly, homodimer. The cofactor is Zn(2+).

It localises to the cytoplasm. It catalyses the reaction tRNA(Thr) + L-threonine + ATP = L-threonyl-tRNA(Thr) + AMP + diphosphate + H(+). Functionally, catalyzes the attachment of threonine to tRNA(Thr) in a two-step reaction: L-threonine is first activated by ATP to form Thr-AMP and then transferred to the acceptor end of tRNA(Thr). Also edits incorrectly charged L-seryl-tRNA(Thr). This chain is Threonine--tRNA ligase, found in Actinobacillus pleuropneumoniae serotype 7 (strain AP76).